A 169-amino-acid chain; its full sequence is Large ribosomal subunit protein uL10 (169 aa).

The protein belongs to the universal ribosomal protein uL10 family. As to quaternary structure, part of the ribosomal stalk of the 50S ribosomal subunit. The N-terminus interacts with L11 and the large rRNA to form the base of the stalk. The C-terminus forms an elongated spine to which L12 dimers bind in a sequential fashion forming a multimeric L10(L12)X complex.

Forms part of the ribosomal stalk, playing a central role in the interaction of the ribosome with GTP-bound translation factors. This Deinococcus geothermalis (strain DSM 11300 / CIP 105573 / AG-3a) protein is Large ribosomal subunit protein uL10.